The chain runs to 396 residues: Bone morphogenetic protein 2 (396 aa).

Residues 1–23 (MVAGTRCLLALLLPQVLLGGAAG) form the signal peptide. A propeptide spans 24–282 (LVPELGRRKF…GHPLHKREKR (259 aa)) (cleaved by PCSK5). A disordered region spans residues 84-121 (RRHSGQPGSPAPDHRLERAASRANTVRSFHHEESLEEL). Ser87 is modified (phosphoserine). N-linked (GlcNAc...) asparagine glycans are attached at residues Asn135, Asn163, Asn164, and Asn200. The disordered stretch occupies residues 271–293 (GKGHPLHKREKRQAKHKQRKRLK). The span at 274 to 293 (HPLHKREKRQAKHKQRKRLK) shows a compositional bias: basic residues. Cystine bridges form between Cys296–Cys361, Cys325–Cys393, and Cys329–Cys395. Asn338 is a glycosylation site (N-linked (GlcNAc...) (high mannose) asparagine).

The protein belongs to the TGF-beta family. In terms of assembly, homodimer; disulfide-linked. Interacts with SOSTDC1. Interacts with GREM2, RGMA, RGMB and RGMC. Interacts with ASPN. Interacts with MAFP5. Interacts with FBN1 (via N-terminal domain) and FBN2. Interacts with type I receptor BMPR1A. Interacts with type II receptor BMPR2. Interacts with SCUBE3. Interacts with TNFAIP6 (primarily via Link domain); this interaction is inhibited by hyaluronan. Interacts with ERFE. Interacts with BMPR1A/ALK3; the interaction may induce HAMP expression. Forms heterodimers with BMP6 in vitro; the heterodimer then binds to its receptor BMPR1A /ALK3 and may induce HAMP expression. Interacts with TGFBR3. In terms of tissue distribution, particularly abundant in lung, spleen and colon and in low but significant levels in heart, brain, placenta, liver, skeletal muscle, kidney, pancreas, prostate, ovary and small intestine.

The protein localises to the secreted. Functionally, growth factor of the TGF-beta superfamily that plays essential roles in many developmental processes, including cardiogenesis, neurogenesis, and osteogenesis. Induces cartilage and bone formation. Initiates the canonical BMP signaling cascade by associating with type I receptor BMPR1A and type II receptor BMPR2. Once all three components are bound together in a complex at the cell surface, BMPR2 phosphorylates and activates BMPR1A. In turn, BMPR1A propagates signal by phosphorylating SMAD1/5/8 that travel to the nucleus and act as activators and repressors of transcription of target genes. Also acts to promote expression of HAMP, via the interaction with its receptor BMPR1A/ALK3. Can also signal through non-canonical pathways such as ERK/MAP kinase signaling cascade that regulates osteoblast differentiation. Also stimulates the differentiation of myoblasts into osteoblasts via the EIF2AK3-EIF2A-ATF4 pathway by stimulating EIF2A phosphorylation which leads to increased expression of ATF4 which plays a central role in osteoblast differentiation. Acts as a positive regulator of odontoblast differentiation during mesenchymal tooth germ formation, expression is repressed during the bell stage by MSX1-mediated inhibition of CTNNB1 signaling. The sequence is that of Bone morphogenetic protein 2 (BMP2) from Homo sapiens (Human).